A 546-amino-acid polypeptide reads, in one-letter code: Probable protein kinase UbiB (546 aa).

A Protein kinase domain is found at 124 to 502 (DFEIKPLASA…HVRQGQSRYF (379 aa)). ATP is bound by residues 130-138 (LASASIAQV) and Lys153. The active-site Proton acceptor is Asp288. 2 helical membrane-spanning segments follow: residues 501-521 (YFLG…VSRP) and 522-542 (EWGL…FVGW).

Belongs to the ABC1 family. UbiB subfamily.

Its subcellular location is the cell inner membrane. Its pathway is cofactor biosynthesis; ubiquinone biosynthesis [regulation]. Functionally, is probably a protein kinase regulator of UbiI activity which is involved in aerobic coenzyme Q (ubiquinone) biosynthesis. This chain is Probable protein kinase UbiB, found in Escherichia coli O45:K1 (strain S88 / ExPEC).